Here is a 559-residue protein sequence, read N- to C-terminus: POU domain protein 1 (559 aa).

A POU-specific domain is found at 259–333; that stretch reads EDLPSSDDLE…LLQKWLHEAD (75 aa). Residues 351 to 410 constitute a DNA-binding region (homeobox); it reads KRKKRTSIEANVKSILESSFMKLSKPSAQDISSLAEKLSLEKEVVRVWFCNRRQKEKRIT.

The protein belongs to the POU transcription factor family.

The protein localises to the nucleus. This is POU domain protein 1 (POU1) from Dugesia japonica (Planarian).